A 1121-amino-acid chain; its full sequence is MTAAAASNWGLITNIVNSIVGVSVLTMPFCFKQCGIVLGALLLVFCSWMTHQSCMFLVKSASLSKRRTYAGLAFHAYGKAGKMLVETSMIGLMLGTCIAFYVVIGDLGSNFFARLFGFQVGGTFRMFLLFAVSLCIVLPLSLQRNMMASIQSFSAMALLFYTVFMFVIVLSSLKHGLFSGQWLRRVSYVRWEGVFRCIPIFGMSFACQSQVLPTYDSLDEPSVKTMSSIFASSLNVVTTFYVMVGFFGYVSFTEATAGNVLMHFPSNLVTEMLRVGFMMSVAVGFPMMILPCRQALSTLLCEQQQKDGTFAAGGYMPPLRFKALTLSVVFGTMVGGILIPNVETILGLTGATMGSLICFICPALIYKKIHKNALSSQVVLWVGLGILVVSTVTTLSVSEDVPEDLAEEAPGGRLGEAEGLMKVEAARLSAQDPVVAVAEDGREKPKLPKEREELEQAQIKGPVDVPGREDGKEAQEEAQLDRPGQGIAVPVGEAHRHEPPVPHDKVVVDEGQDQEVPEENKPPSRHAGRKAPGVQGQMAPPLPDSEREKREPEQGEVGKRPGQAQALEEAGDLPEDPQKVPEADGQPAVQPAKEDLEPGDGGLHPRPQAVLSEQQNGLAVDEGEKAEGVPPPGNAAGDTGQPAEDSDHGGKPPLPEEKPAPGAGLPPEPREQRDVERAGGDQAASQLEEAGRAEMLDHAVLLQVIKEQQVQQKRLLDQQEKLLAVIEEQHKEIHQQRQEDEEDKPRQVEVHPEPGAAVPRGQEAPEGKARETMENLPPLPLDPVLRAPGGRPAPSQDLNQRSLEHPERPVGRDPAGPPDGGPDTEPRAAQAKPRDGQKDAAPGAAGTVKELLKGLEQVPVPDPAREAGGPEERLAEEFPGQSQDVTGGGSQDRKKPGKEVAATGTGILKEANWLVAGPGAEMGDPHMKPKQMSRDLGLAVDLPGGAEGAAAQPQAVLRQPELRVISDGEQGGQQGHRLDHGGYLEMRKEARGGDHMPVSHEQLGGEEDAAVPEPRQRPEPELGLKQAVPGGQRPDNAKPNRDLKLQAGSDLRRRRRDLGPHAEGELAPRDRVIIGLNPLPDVQVNDLRGALDAQLRQAAGGALQVVHSRQLRQAPGAPEES.

The next 10 helical transmembrane spans lie at 4–24 (AAAS…GVSV), 36–58 (IVLG…MFLV), 84–104 (LVET…YVVI), 120–140 (VGGT…VLPL), 153–173 (FSAM…LSSL), 229–249 (IFAS…FFGY), 272–292 (MLRV…ILPC), 323–343 (ALTL…PNVE), 345–365 (ILGL…PALI), and 378–398 (VVLW…LSVS). 3 disordered regions span residues 434–691 (VVAV…EEAG), 731–904 (KEIH…AATG), and 965–1068 (ISDG…ELAP). Basic and acidic residues-rich tracts occupy residues 439 to 454 (EDGR…REEL), 466 to 475 (PGREDGKEAQ), 493 to 508 (EAHR…KVVV), and 544 to 559 (DSER…EVGK). Residue Ser-612 is modified to Phosphoserine. Composition is skewed to basic and acidic residues over residues 645–659 (DSDH…EEKP), 668–679 (EPREQRDVERAG), 731–752 (KEIH…EVHP), 763–773 (EAPEGKARETM), 802–811 (SLEHPERPVG), and 863–876 (PARE…RLAE). Thr-772 carries the post-translational modification Phosphothreonine. Position 802 is a phosphoserine (Ser-802). Residues Ser-890 and Ser-966 each carry the phosphoserine modification. The span at 976-998 (HRLDHGGYLEMRKEARGGDHMPV) shows a compositional bias: basic and acidic residues. Ser-999 is modified (phosphoserine). 2 stretches are compositionally biased toward basic and acidic residues: residues 1035–1044 (DNAKPNRDLK) and 1057–1068 (DLGPHAEGELAP).

This sequence belongs to the amino acid/polyamine transporter 2 family.

It is found in the membrane. The enzyme catalyses L-glutamate(out) = L-glutamate(in). It catalyses the reaction L-glutamine(out) = L-glutamine(in). It carries out the reaction L-alanine(in) = L-alanine(out). The catalysed reaction is L-serine(in) = L-serine(out). The enzyme catalyses L-leucine(in) = L-leucine(out). Functionally, facilitates bidirectional transport of amino acids. May act as a glutamate sensor that regulates glutamate-glutamine cycle and mTOR signaling in the brain. The transport mechanism remains to be elucidated. The polypeptide is Solute carrier family 38 member 10 (Pongo abelii (Sumatran orangutan)).